The chain runs to 499 residues: Probable dipeptidase B (499 aa).

C26 is a catalytic residue.

This sequence belongs to the peptidase C69 family.

The enzyme catalyses an L-aminoacyl-L-amino acid + H2O = 2 an L-alpha-amino acid. This chain is Probable dipeptidase B (pepDB), found in Streptococcus pyogenes serotype M6 (strain ATCC BAA-946 / MGAS10394).